A 702-amino-acid polypeptide reads, in one-letter code: Ribosomal RNA large subunit methyltransferase K/L (702 aa).

The region spanning 43 to 154 is the THUMP domain; sequence LVYQSLMWSR…KETASIALDL (112 aa).

This sequence belongs to the methyltransferase superfamily. RlmKL family.

Its subcellular location is the cytoplasm. It carries out the reaction guanosine(2445) in 23S rRNA + S-adenosyl-L-methionine = N(2)-methylguanosine(2445) in 23S rRNA + S-adenosyl-L-homocysteine + H(+). It catalyses the reaction guanosine(2069) in 23S rRNA + S-adenosyl-L-methionine = N(2)-methylguanosine(2069) in 23S rRNA + S-adenosyl-L-homocysteine + H(+). Its function is as follows. Specifically methylates the guanine in position 2445 (m2G2445) and the guanine in position 2069 (m7G2069) of 23S rRNA. The chain is Ribosomal RNA large subunit methyltransferase K/L from Shigella boydii serotype 18 (strain CDC 3083-94 / BS512).